Consider the following 383-residue polypeptide: Chitinase-3-like protein 1 (383 aa).

The first 21 residues, 1–21 (MGLRAAHTGFVVLVLLQSCAA), serve as a signal peptide directing secretion. The region spanning 22–383 (YKLICYYTSW…SAIKDVLARV (362 aa)) is the GH18 domain. Cysteines 26 and 51 form a disulfide. An N-linked (GlcNAc...) asparagine glycan is attached at Asn60. Chitin-binding positions include 70–71 (EW), 97–100 (GGWN), Tyr141, 204–207 (LTYD), and Arg263. The cysteines at positions 300 and 364 are disulfide-linked. Positions 324–338 (QWVAYDDQESVKNKA) are important for AKT1 activation and IL8 production. Trp352 serves as a coordination point for chitin. The N-linked (GlcNAc...) asparagine glycan is linked to Asn367.

It belongs to the glycosyl hydrolase 18 family. In terms of assembly, monomer. Glycosylated. Mammary secretions collected during the non-lactating period.

Its subcellular location is the secreted. The protein localises to the extracellular space. The protein resides in the cytoplasm. It is found in the perinuclear region. It localises to the endoplasmic reticulum. In terms of biological role, carbohydrate-binding lectin with a preference for chitin. Has no chitinase activity. May play a role in tissue remodeling and in the capacity of cells to respond to and cope with changes in their environment. Plays a role in T-helper cell type 2 (Th2) inflammatory response and IL-13-induced inflammation, regulating allergen sensitization, inflammatory cell apoptosis, dendritic cell accumulation and M2 macrophage differentiation. Facilitates invasion of pathogenic enteric bacteria into colonic mucosa and lymphoid organs. Mediates activation of AKT1 signaling pathway and subsequent IL8 production in colonic epithelial cells. Regulates antibacterial responses in lung by contributing to macrophage bacterial killing, controlling bacterial dissemination and augmenting host tolerance. Also regulates hyperoxia-induced injury, inflammation and epithelial apoptosis in lung. This chain is Chitinase-3-like protein 1 (CHI3L1), found in Bos taurus (Bovine).